We begin with the raw amino-acid sequence, 140 residues long: Large ribosomal subunit protein uL11 (140 aa).

The protein belongs to the universal ribosomal protein uL11 family. In terms of assembly, part of the ribosomal stalk of the 50S ribosomal subunit. Interacts with L10 and the large rRNA to form the base of the stalk. L10 forms an elongated spine to which L12 dimers bind in a sequential fashion forming a multimeric L10(L12)X complex. Post-translationally, one or more lysine residues are methylated.

Its function is as follows. Forms part of the ribosomal stalk which helps the ribosome interact with GTP-bound translation factors. The chain is Large ribosomal subunit protein uL11 from Desulfatibacillum aliphaticivorans.